The following is a 1296-amino-acid chain: DNA-directed RNA polymerase subunit beta' (1296 aa).

The Zn(2+) site is built by C60, C62, C75, and C78. The segment at 188–209 is disordered; that stretch reads GAKGDARRKVRESAEREMRQIR. 3 residues coordinate Mg(2+): D535, D537, and D539. Residues C877, C954, C961, and C964 each contribute to the Zn(2+) site.

Belongs to the RNA polymerase beta' chain family. The RNAP catalytic core consists of 2 alpha, 1 beta, 1 beta' and 1 omega subunit. When a sigma factor is associated with the core the holoenzyme is formed, which can initiate transcription. Mg(2+) serves as cofactor. The cofactor is Zn(2+).

It carries out the reaction RNA(n) + a ribonucleoside 5'-triphosphate = RNA(n+1) + diphosphate. Functionally, DNA-dependent RNA polymerase catalyzes the transcription of DNA into RNA using the four ribonucleoside triphosphates as substrates. The sequence is that of DNA-directed RNA polymerase subunit beta' from Parafrankia sp. (strain EAN1pec).